A 592-amino-acid polypeptide reads, in one-letter code: BTB/POZ domain-containing protein At5g03250 (592 aa).

The region spanning 28-98 is the BTB domain; the sequence is SDVTIEVGDM…CYGVKIELTA (71 aa). The 286-residue stretch at 217–502 folds into the NPH3 domain; sequence DWWFDDASFL…VQVLFFEQLR (286 aa). The residue at position 443 (Y443) is a Phosphotyrosine.

The protein belongs to the NPH3 family.

The protein operates within protein modification; protein ubiquitination. Its function is as follows. May act as a substrate-specific adapter of an E3 ubiquitin-protein ligase complex (CUL3-RBX1-BTB) which mediates the ubiquitination and subsequent proteasomal degradation of target proteins. This Arabidopsis thaliana (Mouse-ear cress) protein is BTB/POZ domain-containing protein At5g03250.